We begin with the raw amino-acid sequence, 431 residues long: Histidinol dehydrogenase 1 (431 aa).

3 residues coordinate NAD(+): Y127, Q188, and N211. S234, Q256, and H259 together coordinate substrate. Residues Q256 and H259 each coordinate Zn(2+). Residues E324 and H325 each act as proton acceptor in the active site. The substrate site is built by H325, D358, E412, and H417. D358 contributes to the Zn(2+) binding site. H417 contacts Zn(2+).

The protein belongs to the histidinol dehydrogenase family. Zn(2+) serves as cofactor.

It catalyses the reaction L-histidinol + 2 NAD(+) + H2O = L-histidine + 2 NADH + 3 H(+). Its pathway is amino-acid biosynthesis; L-histidine biosynthesis; L-histidine from 5-phospho-alpha-D-ribose 1-diphosphate: step 9/9. In terms of biological role, catalyzes the sequential NAD-dependent oxidations of L-histidinol to L-histidinaldehyde and then to L-histidine. The polypeptide is Histidinol dehydrogenase 1 (Trichormus variabilis (strain ATCC 29413 / PCC 7937) (Anabaena variabilis)).